Consider the following 302-residue polypeptide: ATP synthase gamma chain (302 aa).

Belongs to the ATPase gamma chain family. As to quaternary structure, F-type ATPases have 2 components, CF(1) - the catalytic core - and CF(0) - the membrane proton channel. CF(1) has five subunits: alpha(3), beta(3), gamma(1), delta(1), epsilon(1). CF(0) has three main subunits: a, b and c.

It localises to the cell membrane. In terms of biological role, produces ATP from ADP in the presence of a proton gradient across the membrane. The gamma chain is believed to be important in regulating ATPase activity and the flow of protons through the CF(0) complex. This chain is ATP synthase gamma chain, found in Leuconostoc citreum (strain KM20).